The following is a 151-amino-acid chain: Probable desiccation-related protein LEA14 (151 aa).

The protein belongs to the LEA type 2 family.

The chain is Probable desiccation-related protein LEA14 (LEA14) from Arabidopsis thaliana (Mouse-ear cress).